The following is a 1145-amino-acid chain: DNA polymerase II large subunit (1145 aa).

Residues 284–303 (KSSSESDEDEETDGKPKIKP) form a disordered region.

It belongs to the archaeal DNA polymerase II family. As to quaternary structure, heterodimer of a large subunit and a small subunit.

The enzyme catalyses DNA(n) + a 2'-deoxyribonucleoside 5'-triphosphate = DNA(n+1) + diphosphate. It carries out the reaction Exonucleolytic cleavage in the 3'- to 5'-direction to yield nucleoside 5'-phosphates.. Functionally, possesses two activities: a DNA synthesis (polymerase) and an exonucleolytic activity that degrades single-stranded DNA in the 3'- to 5'-direction. Has a template-primer preference which is characteristic of a replicative DNA polymerase. This chain is DNA polymerase II large subunit, found in Methanococcoides burtonii (strain DSM 6242 / NBRC 107633 / OCM 468 / ACE-M).